A 1715-amino-acid polypeptide reads, in one-letter code: MALGSRWRPPPQLPPLLLLLALVAGVRGLEFGGGPGQWARYARWAGAASTGELSFSLRTNATRALLLYLDDGGDCDFLELLLVDGRLRLRFTLSCAEPATLQLDTPVADDRWHMVLLTRDARRTALAVDGEARAAEVRSKRREMQVASDLFVGGIPPDVRLSALTLSTVKYEPPFRGLLANLKLGERPPALLGSQGLRGAAADPLCAPARNPCANGGLCTVLAPGEVGCDCSHTGFGGKFCSEGEHPMEGPAHLTLNSPVGSLLFSEGGAGRGGAGDVHQPTKGKEEFVATFKGNEFFCYDLSHNPIQSSTDEITLAFRTLQRNGLMLHTGKSADYVNLSLKSGAVWLVINLGSGAFEALVEPVNGKFNDNAWHDVRVTRNLRQHAGIGHAMVNKLHYLVTISVDGILTTTGYTQEDYTMLGSDDFFYIGGSPNTADLPGSPVSNNFMGCLKDVVYKNNDFKLELSRLAKEGDPKMKLQGDLSFRCEDVAALDPVTFESPEAFVALPRWSAKRTGSISLDFRTTEPNGLLLFSQGRRAGAGVGSHSSSQRADYFAMELLDGYLYLLLDMGSGGIKLRASSRKVNDGEWCHVDFQRDGRKGSISVNSRSTPFLATGESEVLDLESELYLGGLPEGGRVDLPLPPEVWTAALRAGYVGCVRDLFIDGRSRDLRGLAEAQGAVGVAPFCSRETLKQCASAPCRNGGICREGWNRFVCDCIGTGFLGRVCEREATVLSYDGSMYMKIMLPNAMHTEAEDVSLRFMSQRAYGLMMATTSRESADTLRLELDGGQMKLTVNLDCLRVGCAPSAAGKGPETLFAGHKLNDNEWHTVRVVRRGKSLQLSVDNVTVEGQMAGAHTRLEFHNIETGIMTERRFISVVPSNFIGHLSGLVFNGQPYMDQCKDGDITYCELNARFGLRAIVADPVTFKSRSSYLALATLQAYASMHLFFQFKTTAPDGLLLFNSGNGNDFIVIELVKGYIHYVFDLGNGPSLMKGNSDKPVNDNQWHNVVVSRDPGNVHTLKIDSRTVTQHSNGARNLDLKGELYIGGLSKNMFSNLPKLVASRDGFQGCLASVDLNGRLPDLIADALHRIGQVERGCDGPSTTCTEESCANQGVCLQQWDGFTCDCTMTSYGGPVCNDPGTTYIFGKGGALITYTWPPNDRPSTRMDRLAVGFSTHQRSAVLVRVDSASGLGDYLQLHIDQGTVGVIFNVGTDDITIDEPNAIVSDGKYHVVRFTRSGGNATLQVDSWPVNERYPAGNFDNERLAIARQRIPYRLGRVVDEWLLDKGRQLTIFNSQAAIKIGGRDQGRPFQGQVSGLYYNGLKVLALAAESDPNVRTEGHLRLVGEGPSVLLSAETTATTLLADMATTIMETTTTMATTTTRRGRSPTMRDSTTQNTDDLLVASAECPSDDEDLEECEPSTGGELILPIITEDSLDPPPVATRSPFVPPPPTFYPFLTGVGATQDTLPPPAARRPSSGGPCQAERDDSDCEEPVEASGFASGEVFDSSLPPTDDEDFYTTFPLVTDRTTLLSPRKPAPRPNLRTDGATGAPGVLLAPSAPAPNLPAGKMNHRDPLQPLLENPPLGPGVPTAFEPRRPPPLRPGVTSVPGFPRLPTANPTGPGERGPPGAVEVIRESSSTTGMVVGIVAAAALCILILLYAMYKYRNRDEGSYQVDQSRNYISNSAQSNGAVVKEKAPAAPKTPSKAKKNKDKEYYV.

Residues 1–29 (MALGSRWRPPPQLPPLLLLLALVAGVRGL) form the signal peptide. The 177-residue stretch at 30–206 (EFGGGPGQWA…LRGAAADPLC (177 aa)) folds into the Laminin G-like 1 domain. Topologically, residues 30–1639 (EFGGGPGQWA…EVIRESSSTT (1610 aa)) are extracellular. N-linked (GlcNAc...) asparagine glycosylation is present at Asn60. Residues 202 to 242 (ADPLCAPARNPCANGGLCTVLAPGEVGCDCSHTGFGGKFCS) form the EGF-like 1 domain. Intrachain disulfides connect Cys206–Cys219, Cys213–Cys229, and Cys231–Cys241. 2 Laminin G-like domains span residues 289–486 (VATF…SFRC) and 493–686 (DPVT…APFC). A Ca(2+)-binding site is contributed by Asp335. An N-linked (GlcNAc...) asparagine glycan is attached at Asn338. The Ca(2+) site is built by Leu352 and Met420. 5 disulfides stabilise this stretch: Cys450/Cys486, Cys657/Cys686, Cys694/Cys705, Cys699/Cys714, and Cys716/Cys726. The EGF-like 2 domain occupies 690 to 727 (TLKQCASAPCRNGGICREGWNRFVCDCIGTGFLGRVCE). Laminin G-like domains lie at 732–907 (VLSY…ITYC) and 921–1096 (DPVT…ERGC). Ca(2+)-binding residues include Asp779 and Leu796. Asn844 carries N-linked (GlcNAc...) asparagine glycosylation. Ca(2+) is bound at residue Arg857. 4 disulfide bridges follow: Cys1068–Cys1096, Cys1103–Cys1114, Cys1108–Cys1123, and Cys1125–Cys1135. One can recognise an EGF-like 3 domain in the interval 1099 to 1136 (PSTTCTEESCANQGVCLQQWDGFTCDCTMTSYGGPVCN). The Laminin G-like 6 domain occupies 1140 to 1348 (TTYIFGKGGA…HLRLVGEGPS (209 aa)). Asp1192 and Val1209 together coordinate Ca(2+). Asn1239 carries N-linked (GlcNAc...) asparagine glycosylation. Ca(2+) is bound by residues Ile1291 and Asn1293. Ser1403 carries O-linked (Xyl...) (heparan sulfate) serine glycosylation. Disordered regions lie at residues 1461–1511 (ATQD…LPPT), 1529–1549 (LLSP…ATGA), and 1583–1626 (LGPG…RGPP). A helical transmembrane segment spans residues 1640–1660 (GMVVGIVAAAALCILILLYAM). The Cytoplasmic portion of the chain corresponds to 1661–1715 (YKYRNRDEGSYQVDQSRNYISNSAQSNGAVVKEKAPAAPKTPSKAKKNKDKEYYV). Positions 1682–1715 (NSAQSNGAVVKEKAPAAPKTPSKAKKNKDKEYYV) are disordered.

It belongs to the neurexin family. In terms of assembly, the laminin G-like domain 1 binds to NXPH1. Interacts with PATJ. Interacts with CBLN1, CBLN2 and, less avidly, with CBLN4. Specific isoforms bind neuroligins NLGN1, NLGN2 and NLGN3. Isoform 5c/alpha-2C binds to alpha-dystroglycan. Interacts (via Laminin G-like 1 domain) with IGSF21 (Ig-like 1 domain) in a trans-interaction manner. Interacts with CLSTN3. Post-translationally, O-glycosylated; contains heparan sulfate. Heparan sulfate attachment is required for synapse development by mediating interactions with neuroligins. In terms of tissue distribution, brain (neuronal synapse).

The protein resides in the presynaptic cell membrane. Functionally, neuronal cell surface protein that may be involved in cell recognition and cell adhesion. May mediate intracellular signaling. This is Neurexin-2 (Nrxn2) from Rattus norvegicus (Rat).